The following is a 346-amino-acid chain: MTAGRGDEDSLAAGGPARHIPVLRDEILELAAPQADGLYLDATFGAGGYSRGLLATQGARVLAIDRDPGAIAAGAGLIAESNGRLTLVEARFSDLAAVAERLGLGAFDAALFDIGVSSMQLDEAARGFSFRFDGPLDMRMQQSGPSAADIVNDADEEALADILYYFGEERASRRIAKAIVMDRAKAPFRSTAALAAMIARVCPGKPGDIHPATRSFQALRIAVNDELGELVAGLAGAEARLKPGGRLAVVTFHSLEDRIVKLFFAGRSGRGEAPSRRLPGEPIPPPPTFAVSGRQPVTPSAAEIAANPRARSAKLRHGVRTSAPARAPGRDLMALAALPQRAAKGR.

S-adenosyl-L-methionine contacts are provided by residues 47 to 49 (GGY), Asp65, Phe92, Asp113, and Gln120. Residues 270-279 (RGEAPSRRLP) are compositionally biased toward basic and acidic residues. The disordered stretch occupies residues 270–346 (RGEAPSRRLP…ALPQRAAKGR (77 aa)).

The protein belongs to the methyltransferase superfamily. RsmH family.

The protein resides in the cytoplasm. It catalyses the reaction cytidine(1402) in 16S rRNA + S-adenosyl-L-methionine = N(4)-methylcytidine(1402) in 16S rRNA + S-adenosyl-L-homocysteine + H(+). Its function is as follows. Specifically methylates the N4 position of cytidine in position 1402 (C1402) of 16S rRNA. This Methylocella silvestris (strain DSM 15510 / CIP 108128 / LMG 27833 / NCIMB 13906 / BL2) protein is Ribosomal RNA small subunit methyltransferase H.